A 124-amino-acid polypeptide reads, in one-letter code: Large-conductance mechanosensitive channel (124 aa).

The next 3 membrane-spanning stretches (helical) occupy residues 14–34 (VIDL…VQSL), 37–57 (NLIN…NLVF), and 67–87 (GSFI…FLIV).

It belongs to the MscL family. In terms of assembly, homopentamer.

Its subcellular location is the cell membrane. In terms of biological role, channel that opens in response to stretch forces in the membrane lipid bilayer. May participate in the regulation of osmotic pressure changes within the cell. This Lactobacillus acidophilus (strain ATCC 700396 / NCK56 / N2 / NCFM) protein is Large-conductance mechanosensitive channel.